The chain runs to 89 residues: Putative RING finger protein 121R (89 aa).

Residues 45-78 (CPICLIAKVNTVLECTHVLCSNCVKKINVCPICR) form an RING-type zinc finger.

The polypeptide is Putative RING finger protein 121R (Invertebrate iridescent virus 6 (IIV-6)).